The primary structure comprises 258 residues: Alcohol dehydrogenase 2 (258 aa).

9–33 lines the NAD(+) pocket; the sequence is IFVGGLGFIGYEACKQLMAKNMASF. S137 serves as a coordination point for substrate. Y150 serves as the catalytic Proton acceptor.

Belongs to the short-chain dehydrogenases/reductases (SDR) family. As to quaternary structure, homodimer.

The enzyme catalyses a primary alcohol + NAD(+) = an aldehyde + NADH + H(+). It catalyses the reaction a secondary alcohol + NAD(+) = a ketone + NADH + H(+). This chain is Alcohol dehydrogenase 2 (ADH2), found in Ceratitis capitata (Mediterranean fruit fly).